The primary structure comprises 239 residues: Ribonuclease PH (239 aa).

Phosphate is bound by residues arginine 87 and 125-127 (GTR).

It belongs to the RNase PH family. As to quaternary structure, homohexameric ring arranged as a trimer of dimers.

The catalysed reaction is tRNA(n+1) + phosphate = tRNA(n) + a ribonucleoside 5'-diphosphate. Its function is as follows. Phosphorolytic 3'-5' exoribonuclease that plays an important role in tRNA 3'-end maturation. Removes nucleotide residues following the 3'-CCA terminus of tRNAs; can also add nucleotides to the ends of RNA molecules by using nucleoside diphosphates as substrates, but this may not be physiologically important. Probably plays a role in initiation of 16S rRNA degradation (leading to ribosome degradation) during starvation. This Azotobacter vinelandii (strain DJ / ATCC BAA-1303) protein is Ribonuclease PH.